The primary structure comprises 126 residues: Protein chibby homolog 1 (126 aa).

The span at 1–10 (MPFFGNTFSP) shows a compositional bias: polar residues. Residues 1-26 (MPFFGNTFSPKKTPPRKSASLSNLHS) are disordered. Serine 9 and serine 20 each carry phosphoserine. The segment at 60-112 (IAETGVSGGVDRREVQRLRRRNQQLEEENNLLRLKVDILLDMLSESTAESHLM) is minimal region for the interaction with PKD2. Positions 67–125 (GGVDRREVQRLRRRNQQLEEENNLLRLKVDILLDMLSESTAESHLMEKELDELRISRKR) form a coiled coil. The interval 77-98 (LRRRNQQLEEENNLLRLKVDIL) is leucine-zipper; mediates homodimerization.

It belongs to the chibby family. Homodimer. Homodimerization is essential for nuclear localization and interaction with KPNA4 but is dispensable for interaction with CTNNB1. Interacts with polycystin-2/PKD2 and GM130. Interacts with the C-terminal region of CTNNB1. Interacts (C-terminus) with TCIM (C-terminus), TCIM competes with CTNNB1 for the interaction with CBY1. Interacts with FAM92A; this interaction facilitates targeting of FAM92A to cilium basal body. Interacts with CIBAR2. Interacts with KPNA4. As to expression, widely expressed. Expressed at higher levels in heart, skeletal muscle, kidney and placenta. Also found in brain, lung, liver and testis. Significantly down-regulated in thyroid and metastatic uterine tumors.

It localises to the nucleus speckle. The protein localises to the cytoplasm. It is found in the cytoskeleton. The protein resides in the cilium basal body. Its subcellular location is the microtubule organizing center. It localises to the centrosome. The protein localises to the centriole. It is found in the golgi apparatus. The protein resides in the trans-Golgi network. Its subcellular location is the cell projection. It localises to the cilium. The protein localises to the flagellum. It is found in the nucleus. Inhibits the Wnt/Wingless pathway by binding to CTNNB1/beta-catenin and inhibiting beta-catenin-mediated transcriptional activation through competition with TCF/LEF transcription factors. Has also been shown to play a role in regulating the intracellular trafficking of polycystin-2/PKD2 and possibly of other intracellular proteins. Promotes adipocyte and cardiomyocyte differentiation. The chain is Protein chibby homolog 1 (CBY1) from Homo sapiens (Human).